Consider the following 94-residue polypeptide: Large ribosomal subunit protein bL27 (94 aa).

Positions 1-9 (MLRLDLQFF) are excised as a propeptide.

The protein belongs to the bacterial ribosomal protein bL27 family. Post-translationally, the N-terminus is cleaved by ribosomal processing cysteine protease Prp.

This is Large ribosomal subunit protein bL27 from Bacillus pumilus (strain SAFR-032).